Reading from the N-terminus, the 219-residue chain is Probable nicotinate-nucleotide adenylyltransferase (219 aa).

This sequence belongs to the NadD family.

The enzyme catalyses nicotinate beta-D-ribonucleotide + ATP + H(+) = deamido-NAD(+) + diphosphate. It functions in the pathway cofactor biosynthesis; NAD(+) biosynthesis; deamido-NAD(+) from nicotinate D-ribonucleotide: step 1/1. Functionally, catalyzes the reversible adenylation of nicotinate mononucleotide (NaMN) to nicotinic acid adenine dinucleotide (NaAD). The polypeptide is Probable nicotinate-nucleotide adenylyltransferase (Pseudomonas entomophila (strain L48)).